We begin with the raw amino-acid sequence, 245 residues long: Thymidylate kinase (245 aa).

Residue 55 to 62 (GIDGVGKS) coordinates ATP.

This sequence belongs to the thymidylate kinase family.

The catalysed reaction is dTMP + ATP = dTDP + ADP. Phosphorylation of dTMP to form dTDP in both de novo and salvage pathways of dTTP synthesis. In Rhodopirellula baltica (strain DSM 10527 / NCIMB 13988 / SH1), this protein is Thymidylate kinase.